The sequence spans 366 residues: Anhydro-N-acetylmuramic acid kinase (366 aa).

ATP is bound at residue 10–17 (GTSMDGID).

Belongs to the anhydro-N-acetylmuramic acid kinase family.

It catalyses the reaction 1,6-anhydro-N-acetyl-beta-muramate + ATP + H2O = N-acetyl-D-muramate 6-phosphate + ADP + H(+). It functions in the pathway amino-sugar metabolism; 1,6-anhydro-N-acetylmuramate degradation. It participates in cell wall biogenesis; peptidoglycan recycling. Its function is as follows. Catalyzes the specific phosphorylation of 1,6-anhydro-N-acetylmuramic acid (anhMurNAc) with the simultaneous cleavage of the 1,6-anhydro ring, generating MurNAc-6-P. Is required for the utilization of anhMurNAc either imported from the medium or derived from its own cell wall murein, and thus plays a role in cell wall recycling. In Legionella pneumophila (strain Corby), this protein is Anhydro-N-acetylmuramic acid kinase.